The primary structure comprises 208 residues: MVNSKYSMCSSGWLQKHFKDQYVKAAQRQKLRSRSWFKLDAINRIDALFSTGMTVIDLGSAPGGWALYVKSKIGKTGRIVACDILSMRNISGVNFLKGDCSNPNISKILYKWVGQKQVNVVLSDMAPNTTGISIIDVSRSIHLGNLALNICRNVLMHRGAFLVKVFQGKGLDKYLCDVHSLFNIVRIRKPDASRSHSREVYIVAKERK.

Gly-63, Trp-65, Asp-83, Asp-99, and Asp-124 together coordinate S-adenosyl-L-methionine. Lys-164 serves as the catalytic Proton acceptor.

Belongs to the class I-like SAM-binding methyltransferase superfamily. RNA methyltransferase RlmE family.

Its subcellular location is the cytoplasm. It catalyses the reaction uridine(2552) in 23S rRNA + S-adenosyl-L-methionine = 2'-O-methyluridine(2552) in 23S rRNA + S-adenosyl-L-homocysteine + H(+). Its function is as follows. Specifically methylates the uridine in position 2552 of 23S rRNA at the 2'-O position of the ribose in the fully assembled 50S ribosomal subunit. This chain is Ribosomal RNA large subunit methyltransferase E, found in Blochmanniella pennsylvanica (strain BPEN).